The sequence spans 679 residues: DNA ligase (679 aa).

NAD(+) contacts are provided by residues 36-40 (DAQYD), 85-86 (SL), and glutamate 116. Catalysis depends on lysine 118, which acts as the N6-AMP-lysine intermediate. Residues arginine 139, glutamate 174, lysine 300, and lysine 324 each contribute to the NAD(+) site. Residues cysteine 418, cysteine 421, cysteine 436, and cysteine 441 each coordinate Zn(2+). The 80-residue stretch at 600-679 (EGGGPLNGKV…NEFRELTGRK (80 aa)) folds into the BRCT domain.

Belongs to the NAD-dependent DNA ligase family. LigA subfamily. Mg(2+) serves as cofactor. It depends on Mn(2+) as a cofactor.

The enzyme catalyses NAD(+) + (deoxyribonucleotide)n-3'-hydroxyl + 5'-phospho-(deoxyribonucleotide)m = (deoxyribonucleotide)n+m + AMP + beta-nicotinamide D-nucleotide.. Its function is as follows. DNA ligase that catalyzes the formation of phosphodiester linkages between 5'-phosphoryl and 3'-hydroxyl groups in double-stranded DNA using NAD as a coenzyme and as the energy source for the reaction. It is essential for DNA replication and repair of damaged DNA. In Pelotomaculum thermopropionicum (strain DSM 13744 / JCM 10971 / SI), this protein is DNA ligase.